Here is a 790-residue protein sequence, read N- to C-terminus: Cadherin-18 (790 aa).

The N-terminal stretch at 1–24 is a signal peptide; sequence MKITSTSCICPVLVCLCFVQRCYG. The propeptide occupies 25–53; it reads TAHHSSIKVMRNQTKHIEGETEVHHRPKR. N-linked (GlcNAc...) asparagine glycosylation is present at asparagine 36. 5 consecutive Cadherin domains span residues 54-159, 160-268, 269-383, 384-486, and 487-608; these read GWVW…APKF, TDGP…PPRF, PQKH…PPLF, SMPS…DNPP, and ELAR…FLSS. At 54-608 the chain is on the extracellular side; that stretch reads GWVWNQFFVL…TCHAEAFLSS (555 aa). A glycan (N-linked (GlcNAc...) asparagine) is linked at asparagine 255. N-linked (GlcNAc...) asparagine glycans are attached at residues asparagine 455 and asparagine 536. The helical transmembrane segment at 609-636 threads the bilayer; it reads AGLSTGALIAILLCVLILLAIVVLFITL. The Cytoplasmic segment spans residues 637–790; sequence RRSKKEPLII…YGEIESERTT (154 aa). At serine 786 the chain carries Phosphoserine.

The protein resides in the cell membrane. Its function is as follows. Cadherins are calcium-dependent cell adhesion proteins. They preferentially interact with themselves in a homophilic manner in connecting cells; cadherins may thus contribute to the sorting of heterogeneous cell types. This chain is Cadherin-18 (CDH18), found in Homo sapiens (Human).